A 1861-amino-acid polypeptide reads, in one-letter code: Polyketide synthase 2 (1861 aa).

Residues 109–525 (DSKIAIIGMS…GGNSALLLED (417 aa)) form the Ketosynthase family 3 (KS3) domain. Residues Cys264, His399, and His441 each act as for beta-ketoacyl synthase activity in the active site. Residues 626-931 (GFVFSGQGAQ…PSLHRKDDGW (306 aa)) form a malonyl-CoA:ACP transacylase (MAT) domain region. The active-site For acyl/malonyl transferase activity is Ser716. The product template (PT) domain stretch occupies residues 1008 to 1312 (TSSVQKVIQQ…VFGGMTVLPP (305 aa)). Residues 1012–1146 (QKVIQQTDGP…CILRFADPKS (135 aa)) are N-terminal hotdog fold. The 307-residue stretch at 1012 to 1318 (QKVIQQTDGP…VLPPRRGADA (307 aa)) folds into the PKS/mFAS DH domain. His1045 acts as the Proton acceptor; for dehydratase activity in catalysis. The C-terminal hotdog fold stretch occupies residues 1174-1318 (DSLLSKGIVY…VLPPRRGADA (145 aa)). Residue Asp1232 is the Proton donor; for dehydratase activity of the active site. The Carrier 1 domain maps to 1356–1433 (SPQSGAIHRI…ELRLFLAADQ (78 aa)). Ser1393 is subject to O-(pantetheine 4'-phosphoryl)serine. The interval 1441-1470 (CESSNGQHTPQTSDKGSGTLTAQKPDHDTD) is disordered. The segment covering 1442–1462 (ESSNGQHTPQTSDKGSGTLTA) has biased composition (polar residues). Residues 1472-1546 (EMTLNRVCAI…SLQKTLRGTE (75 aa)) form the Carrier 2 domain. An O-(pantetheine 4'-phosphoryl)serine modification is found at Ser1506. Residues 1582 to 1855 (ASAPHATSIL…IIEMSNLIGD (274 aa)) are thioesterase (TE) domain. The active-site For thioesterase activity is Ser1685.

In terms of biological role, polyketide synthase; part of the Pks2 gene cluster that mediates the formation of infectious structures (appressoria), enabling these fungi to kill insects faster. The product of the Pks2 gene cluster is different from the one of Pks1 and has still not been identified. The chain is Polyketide synthase 2 from Metarhizium acridum (strain CQMa 102).